The sequence spans 447 residues: Trigger factor (447 aa).

In terms of domain architecture, PPIase FKBP-type spans 164–249 (GDLVVIDFIG…VKEVKQAVVP (86 aa)).

It belongs to the FKBP-type PPIase family. Tig subfamily.

The protein localises to the cytoplasm. The enzyme catalyses [protein]-peptidylproline (omega=180) = [protein]-peptidylproline (omega=0). In terms of biological role, involved in protein export. Acts as a chaperone by maintaining the newly synthesized protein in an open conformation. Functions as a peptidyl-prolyl cis-trans isomerase. This Rhodospirillum rubrum (strain ATCC 11170 / ATH 1.1.1 / DSM 467 / LMG 4362 / NCIMB 8255 / S1) protein is Trigger factor.